The chain runs to 258 residues: 4-hydroxy-tetrahydrodipicolinate reductase (258 aa).

10–15 lines the NAD(+) pocket; the sequence is GCLGRM. An NADP(+)-binding site is contributed by lysine 38. Residues 89–91 and 113–116 each bind NAD(+); these read GTT and AGNM. The active-site Proton donor/acceptor is histidine 146. (S)-2,3,4,5-tetrahydrodipicolinate is bound at residue histidine 147. Catalysis depends on lysine 150, which acts as the Proton donor. 156 to 157 is a binding site for (S)-2,3,4,5-tetrahydrodipicolinate; the sequence is GT.

It belongs to the DapB family.

Its subcellular location is the cytoplasm. It catalyses the reaction (S)-2,3,4,5-tetrahydrodipicolinate + NAD(+) + H2O = (2S,4S)-4-hydroxy-2,3,4,5-tetrahydrodipicolinate + NADH + H(+). The catalysed reaction is (S)-2,3,4,5-tetrahydrodipicolinate + NADP(+) + H2O = (2S,4S)-4-hydroxy-2,3,4,5-tetrahydrodipicolinate + NADPH + H(+). Its pathway is amino-acid biosynthesis; L-lysine biosynthesis via DAP pathway; (S)-tetrahydrodipicolinate from L-aspartate: step 4/4. Its function is as follows. Catalyzes the conversion of 4-hydroxy-tetrahydrodipicolinate (HTPA) to tetrahydrodipicolinate. The polypeptide is 4-hydroxy-tetrahydrodipicolinate reductase (Pelagibacter ubique (strain HTCC1062)).